The primary structure comprises 195 residues: Molybdenum cofactor guanylyltransferase (195 aa).

Residues 12–14, Lys-25, Asn-53, Asp-70, and Asp-100 each bind GTP; that span reads LAG. Asp-100 lines the Mg(2+) pocket.

Belongs to the MobA family. In terms of assembly, monomer. Requires Mg(2+) as cofactor.

It is found in the cytoplasm. The catalysed reaction is Mo-molybdopterin + GTP + H(+) = Mo-molybdopterin guanine dinucleotide + diphosphate. Its function is as follows. Transfers a GMP moiety from GTP to Mo-molybdopterin (Mo-MPT) cofactor (Moco or molybdenum cofactor) to form Mo-molybdopterin guanine dinucleotide (Mo-MGD) cofactor. The protein is Molybdenum cofactor guanylyltransferase of Vibrio campbellii (strain ATCC BAA-1116).